A 512-amino-acid chain; its full sequence is DEAD-box ATP-dependent RNA helicase 5 (512 aa).

2 disordered regions span residues 1–33 (MGRS…KLEA) and 45–76 (ATST…GGGK). Residues 14–45 (SRKSKKEKKSKKDKKRKLEAEAEVVVVEAAAA) are a coiled coil. Residues 16-30 (KSKKEKKSKKDKKRK) show a composition bias toward basic residues. The Q motif motif lies at 94–120 (SSFAATALPPQVLDCCKGFERPSPIQA). The 178-residue stretch at 123–300 (WPYLLDGRDF…QEFMDPNPIK (178 aa)) folds into the Helicase ATP-binding domain. 136–143 (AATGSGKT) serves as a coordination point for ATP. The short motif at 248–251 (DEAD) is the DEAD box element. In terms of domain architecture, Helicase C-terminal spans 333-476 (LLDKYHKAQR…VVPPALTKFG (144 aa)).

The protein belongs to the DEAD box helicase family. DDX5/DBP2 subfamily.

It localises to the nucleus. Its subcellular location is the nucleolus. The enzyme catalyses ATP + H2O = ADP + phosphate + H(+). ATP-dependent RNA helicase required for 60S ribosomal subunit synthesis. Involved in efficient pre-rRNA processing, predominantly at site A3, which is necessary for the normal formation of 25S and 5.8S rRNAs. The chain is DEAD-box ATP-dependent RNA helicase 5 from Oryza sativa subsp. japonica (Rice).